A 743-amino-acid polypeptide reads, in one-letter code: Putative cation exchanger C3A12.06c (743 aa).

13 consecutive transmembrane segments (helical) span residues 13 to 33 (LILLWCILGIAYILFWTHRIS), 109 to 129 (FPVLSIIVGWLIFLFITIGIS), 138 to 158 (LVTISWLLQLPDSVVGVTFLA), 182 to 202 (IGELLGSAFFIVAIVAGSVCL), 213 to 233 (FLRDVAFLTGTILLVIMFVLH), 239 to 258 (IWQSLVMILYYLLYVLFVFF), 528 to 548 (LRLLQCVFVPFAFVTFSITGG), 551 to 571 (LYIYAASSVFSILCITALYYY), 580 to 600 (FLPWVSFIGFVLGIIWISTIA), 609 to 629 (ALGVIFNLNESILGLTVFAAG), 649 to 669 (MAMGGVFGGPTLNILIGIGIS), 690 to 710 (LSITAYFLLACLLLLLIYVPL), and 718 to 738 (VLGLLLFILYIVGTSTNIVVE).

The protein belongs to the Ca(2+):cation antiporter (CaCA) (TC 2.A.19) family.

Its subcellular location is the endoplasmic reticulum membrane. Putative cation exchanger. The polypeptide is Putative cation exchanger C3A12.06c (Schizosaccharomyces pombe (strain 972 / ATCC 24843) (Fission yeast)).